The sequence spans 105 residues: Spermatogenesis-associated protein 8 (105 aa).

In terms of tissue distribution, expressed at high levels in adult testis, at moderate levels in sperm and at low levels in fetal testis. Not detected in other tissues.

This chain is Spermatogenesis-associated protein 8 (SPATA8), found in Homo sapiens (Human).